A 525-amino-acid chain; its full sequence is GMP synthase [glutamine-hydrolyzing] (525 aa).

The Glutamine amidotransferase type-1 domain occupies 9-207 (RILILDFGSQ…VLTISGCEAL (199 aa)). Cys-86 (nucleophile) is an active-site residue. Active-site residues include His-181 and Glu-183. One can recognise a GMPS ATP-PPase domain in the interval 208 to 400 (WTPAKIVDDA…LGLPYDMVYR (193 aa)). ATP is bound at residue 235–241 (SGGVDSS).

In terms of assembly, homodimer.

The catalysed reaction is XMP + L-glutamine + ATP + H2O = GMP + L-glutamate + AMP + diphosphate + 2 H(+). It participates in purine metabolism; GMP biosynthesis; GMP from XMP (L-Gln route): step 1/1. Catalyzes the synthesis of GMP from XMP. The sequence is that of GMP synthase [glutamine-hydrolyzing] from Marinobacter nauticus (strain ATCC 700491 / DSM 11845 / VT8) (Marinobacter aquaeolei).